Reading from the N-terminus, the 329-residue chain is (12E)-labda-8(17),12,14-triene synthase (329 aa).

Mg(2+) is bound by residues D90 and E95. Residues 90 to 95 (DDMHGE) carry the DDXXXE motif motif. R184 is a binding site for substrate. Positions 230 and 234 each coordinate Mg(2+). The NXXXSXXXE motif motif lies at 230-238 (NDLASYERE). Residue R237 coordinates substrate. Residue E238 coordinates Mg(2+). 316-317 (RY) is a substrate binding site.

Belongs to the terpene synthase family. Mg(2+) is required as a cofactor.

It carries out the reaction (+)-copalyl diphosphate = (12E)-labda-8(17),12,14-triene + diphosphate. Its function is as follows. Involved in the biosynthesis of the mercapturic acid derivative diterpene cyslabdan A, a potentiator of the beta-lactam antibiotic imipenem. Catalyzes the conversion of (+)-copalyl diphosphate to yield labda-8(17),12(E),14-triene (biformene). The polypeptide is (12E)-labda-8(17),12,14-triene synthase (Streptomyces cyslabdanicus).